The primary structure comprises 180 residues: UPF0743 protein C215.06c (180 aa).

2 C2HC LYAR-type zinc fingers span residues 1–26 (MVSFCCEVCQDIIKKPKLDQHRSRCH) and 27–51 (GAYFTCIDCNTTFERTDYRNHTSCM). Residues cysteine 6, cysteine 9, histidine 21, cysteine 25, cysteine 32, cysteine 35, histidine 47, and cysteine 50 each contribute to the Zn(2+) site. A disordered region spans residues 61 to 125 (LYRPTKKELK…KETVSSPAEQ (65 aa)). Over residues 77 to 95 (NAVNSKELSPNTDNQNTPA) the composition is skewed to polar residues. The residue at position 85 (serine 85) is a Phosphoserine. A compositionally biased stretch (basic and acidic residues) spans 100–111 (HSLDENEKDKEN).

The protein belongs to the UPF0743 family.

It localises to the nucleus. The protein is UPF0743 protein C215.06c of Schizosaccharomyces pombe (strain 972 / ATCC 24843) (Fission yeast).